Here is a 414-residue protein sequence, read N- to C-terminus: Esterase FrsA (414 aa).

It belongs to the FrsA family.

It carries out the reaction a carboxylic ester + H2O = an alcohol + a carboxylate + H(+). Functionally, catalyzes the hydrolysis of esters. The polypeptide is Esterase FrsA (Salmonella dublin (strain CT_02021853)).